A 112-amino-acid chain; its full sequence is Prothymosin alpha-B (112 aa).

A disordered region spans residues 1–112 (MSDTAVDASV…TKKQKTDEDD (112 aa)). The segment covering 9 to 35 (SVEKSTKDLKAKEKEVVEEAENGKDKP) has biased composition (basic and acidic residues). 2 stretches are compositionally biased toward acidic residues: residues 41-83 (ENEE…DEVE) and 92-101 (EDDEDDDDDV). The span at 102–112 (ETKKQKTDEDD) shows a compositional bias: basic and acidic residues.

It belongs to the pro/parathymosin family.

It localises to the nucleus. The sequence is that of Prothymosin alpha-B (ptma-b) from Xenopus laevis (African clawed frog).